A 184-amino-acid chain; its full sequence is Trypsin/chymotrypsin inhibitor (184 aa).

Disulfide bonds link Cys-39-Cys-84 and Cys-136-Cys-147.

This sequence belongs to the protease inhibitor I3 (leguminous Kunitz-type inhibitor) family. Homodimer.

In terms of biological role, inhibits trypsin and alpha-chymotrypsin. This is Trypsin/chymotrypsin inhibitor from Alocasia macrorrhizos (Giant taro).